Reading from the N-terminus, the 250-residue chain is Urease accessory protein UreG 3 (250 aa).

The segment at 1–24 (MPDNASAQQPGQPAQGPNEHYHQP) is disordered. Residues 7–17 (AQQPGQPAQGP) show a composition bias toward low complexity. Residue 37-44 (GPVGTGKS) participates in GTP binding. The interval 230-250 (GTHVPTDPGPMAPHSHSHDGS) is disordered.

This sequence belongs to the SIMIBI class G3E GTPase family. UreG subfamily. Homodimer. UreD, UreF and UreG form a complex that acts as a GTP-hydrolysis-dependent molecular chaperone, activating the urease apoprotein by helping to assemble the nickel containing metallocenter of UreC. The UreE protein probably delivers the nickel.

Its subcellular location is the cytoplasm. Functionally, facilitates the functional incorporation of the urease nickel metallocenter. This process requires GTP hydrolysis, probably effectuated by UreG. This is Urease accessory protein UreG 3 from Streptomyces griseus subsp. griseus (strain JCM 4626 / CBS 651.72 / NBRC 13350 / KCC S-0626 / ISP 5235).